We begin with the raw amino-acid sequence, 307 residues long: UDP-3-O-acyl-N-acetylglucosamine deacetylase (307 aa).

Zn(2+) is bound by residues His80, His239, and Asp243. The active-site Proton donor is His266.

It belongs to the LpxC family. The cofactor is Zn(2+).

The enzyme catalyses a UDP-3-O-[(3R)-3-hydroxyacyl]-N-acetyl-alpha-D-glucosamine + H2O = a UDP-3-O-[(3R)-3-hydroxyacyl]-alpha-D-glucosamine + acetate. It participates in glycolipid biosynthesis; lipid IV(A) biosynthesis; lipid IV(A) from (3R)-3-hydroxytetradecanoyl-[acyl-carrier-protein] and UDP-N-acetyl-alpha-D-glucosamine: step 2/6. Functionally, catalyzes the hydrolysis of UDP-3-O-myristoyl-N-acetylglucosamine to form UDP-3-O-myristoylglucosamine and acetate, the committed step in lipid A biosynthesis. In Neisseria meningitidis serogroup C / serotype 2a (strain ATCC 700532 / DSM 15464 / FAM18), this protein is UDP-3-O-acyl-N-acetylglucosamine deacetylase.